A 177-amino-acid chain; its full sequence is Large ribosomal subunit protein uL6 (177 aa).

Belongs to the universal ribosomal protein uL6 family. As to quaternary structure, part of the 50S ribosomal subunit.

Its function is as follows. This protein binds to the 23S rRNA, and is important in its secondary structure. It is located near the subunit interface in the base of the L7/L12 stalk, and near the tRNA binding site of the peptidyltransferase center. The sequence is that of Large ribosomal subunit protein uL6 from Salmonella dublin (strain CT_02021853).